The following is a 610-amino-acid chain: DNA mismatch repair protein MutL (610 aa).

It belongs to the DNA mismatch repair MutL/HexB family.

Its function is as follows. This protein is involved in the repair of mismatches in DNA. It is required for dam-dependent methyl-directed DNA mismatch repair. May act as a 'molecular matchmaker', a protein that promotes the formation of a stable complex between two or more DNA-binding proteins in an ATP-dependent manner without itself being part of a final effector complex. The chain is DNA mismatch repair protein MutL from Rickettsia africae (strain ESF-5).